A 551-amino-acid chain; its full sequence is ATP synthase subunit alpha, mitochondrial (551 aa).

210 to 217 is a binding site for ATP; the sequence is GDRQTGKT.

Belongs to the ATPase alpha/beta chains family. As to quaternary structure, F-type ATPases have 2 components, CF(1) - the catalytic core - and CF(0) - the membrane proton channel. CF(1) has five subunits: alpha(3), beta(3), gamma(1), delta(1), epsilon(1). CF(0) has three main subunits: a, b and c.

The protein resides in the mitochondrion. The protein localises to the mitochondrion inner membrane. Mitochondrial membrane ATP synthase (F(1)F(0) ATP synthase or Complex V) produces ATP from ADP in the presence of a proton gradient across the membrane which is generated by electron transport complexes of the respiratory chain. F-type ATPases consist of two structural domains, F(1) - containing the extramembraneous catalytic core, and F(0) - containing the membrane proton channel, linked together by a central stalk and a peripheral stalk. During catalysis, ATP synthesis in the catalytic domain of F(1) is coupled via a rotary mechanism of the central stalk subunits to proton translocation. Subunits alpha and beta form the catalytic core in F(1). Rotation of the central stalk against the surrounding alpha(3)beta(3) subunits leads to hydrolysis of ATP in three separate catalytic sites on the beta subunits. Subunit alpha does not bear the catalytic high-affinity ATP-binding sites. This chain is ATP synthase subunit alpha, mitochondrial (atp-1), found in Neurospora crassa (strain ATCC 24698 / 74-OR23-1A / CBS 708.71 / DSM 1257 / FGSC 987).